The sequence spans 422 residues: Aspartate--tRNA(Asp/Asn) ligase (422 aa).

Residue Glu-158 participates in L-aspartate binding. The tract at residues Gln-180–Lys-183 is aspartate. Arg-201 is an L-aspartate binding site. ATP is bound by residues Arg-201–Glu-203, Arg-209–Leu-211, and Glu-345. Ser-348 and Arg-352 together coordinate L-aspartate. An ATP-binding site is contributed by Gly-393 to Arg-396.

It belongs to the class-II aminoacyl-tRNA synthetase family. Type 2 subfamily. Homodimer. Makes part of a ribonucleoprotein particle (RNP) called transamidosome that allows channelling of the aa-tRNA from non-discriminating aspartyl-tRNA synthetase active site to the GatCAB amidotransferase site. The transamidosome complex is formed by two GatCABs, one dimeric ND-AspRSs and two tRNAs(Asn) molecules.

Its subcellular location is the cytoplasm. The catalysed reaction is tRNA(Asx) + L-aspartate + ATP = L-aspartyl-tRNA(Asx) + AMP + diphosphate. Functionally, aspartyl-tRNA synthetase with relaxed tRNA specificity since it is able to aspartylate not only its cognate tRNA(Asp) but also tRNA(Asn) with similar efficiencies. Reaction proceeds in two steps: L-aspartate is first activated by ATP to form Asp-AMP and then transferred to the acceptor end of tRNA(Asp/Asn). The polypeptide is Aspartate--tRNA(Asp/Asn) ligase (aspS2) (Thermus thermophilus (strain ATCC 27634 / DSM 579 / HB8)).